The following is a 110-amino-acid chain: Proline-rich protein 15-like protein A (110 aa).

2 disordered regions span residues 29–51 (IAGD…TDSQ) and 65–110 (TKGR…KSGK). Residues 65 to 85 (TKGRHVKVSHSGRFKEKKRIR) are compositionally biased toward basic residues. A compositionally biased stretch (polar residues) spans 100-110 (TTANENNKSGK).

Belongs to the PRR15 family.

This chain is Proline-rich protein 15-like protein A (prr15la), found in Danio rerio (Zebrafish).